A 955-amino-acid chain; its full sequence is Glutamyl aminopeptidase (955 aa).

Over methionine 1–histidine 17 the chain is Cytoplasmic. Residues valine 18–leucine 38 traverse the membrane as a helical; Signal-anchor for type II membrane protein segment. Residues glycine 39 to alanine 955 are Extracellular-facing. Residues asparagine 118 and asparagine 192 are each glycosylated (N-linked (GlcNAc...) asparagine). Glutamate 218 is a binding site for substrate. 2 N-linked (GlcNAc...) asparagine glycosylation sites follow: asparagine 319 and asparagine 335. Glycine 352 to asparagine 356 lines the substrate pocket. Position 388 (histidine 388) interacts with Zn(2+). The Proton acceptor role is filled by glutamate 389. Residues histidine 392 and glutamate 411 each contribute to the Zn(2+) site. N-linked (GlcNAc...) asparagine glycosylation is found at asparagine 458, asparagine 547, asparagine 584, asparagine 592, asparagine 674, asparagine 759, asparagine 823, and asparagine 836. A substrate-binding site is contributed by arginine 882.

Belongs to the peptidase M1 family. In terms of assembly, homodimer; disulfide-linked. Zn(2+) serves as cofactor. N-glycosylated. Glycosylation counts for an increased mass of about 32% of the protein mass (about 48 kDa).

Its subcellular location is the cell membrane. It catalyses the reaction Release of N-terminal glutamate (and to a lesser extent aspartate) from a peptide.. Its activity is regulated as follows. Substrate specificity is modulated by calcium which enhances the enzymatic activity for cleavage of acidic residues while reducing its activity with neutral and basic residues. Hydrolytic activity is inhibited by the aminopeptidase inhibitor (Leu and acidic inhibitor) amastatin, but not by bestatin (aminopeptidase inhibitor Leu inhibitor), leupeptin, pepstatin A and PMSF. Its hydrolytic activity is also strongly reduced by zinc ions, with a complete inhibition at 0.5 mM, and moderately inhibited by cobalt and copper ions. Venom protein that cleaves N-terminal acidic residues from peptides with high potency in presence of calcium. It may have several roles in venom including alteration of blood pressure by cleaving circulating angiotensin-2, general degradation of host tissue, increase of permeability to other venom components, and/or processing of other toxins in the venom. This chain is Glutamyl aminopeptidase, found in Bitis rhinoceros (West African gaboon viper).